A 494-amino-acid chain; its full sequence is Ketol-acid reductoisomerase (NADP(+)) (494 aa).

Positions 14–208 constitute a KARI N-terminal Rossmann domain; sequence LDQLGRCRFM…GGHRAGCLES (195 aa). NADP(+)-binding positions include 45 to 48, arginine 68, arginine 76, serine 78, and 108 to 110; these read CGAQ and DKQ. The active site involves histidine 132. Residue glycine 158 coordinates NADP(+). KARI C-terminal knotted domains lie at 209–344 and 345–487; these read SFVA…NYPE and SDVE…MSDM. 4 residues coordinate Mg(2+): aspartate 217, glutamate 221, glutamate 389, and glutamate 393. Serine 414 contributes to the substrate binding site.

This sequence belongs to the ketol-acid reductoisomerase family. The cofactor is Mg(2+).

The enzyme catalyses (2R)-2,3-dihydroxy-3-methylbutanoate + NADP(+) = (2S)-2-acetolactate + NADPH + H(+). It carries out the reaction (2R,3R)-2,3-dihydroxy-3-methylpentanoate + NADP(+) = (S)-2-ethyl-2-hydroxy-3-oxobutanoate + NADPH + H(+). It functions in the pathway amino-acid biosynthesis; L-isoleucine biosynthesis; L-isoleucine from 2-oxobutanoate: step 2/4. The protein operates within amino-acid biosynthesis; L-valine biosynthesis; L-valine from pyruvate: step 2/4. Involved in the biosynthesis of branched-chain amino acids (BCAA). Catalyzes an alkyl-migration followed by a ketol-acid reduction of (S)-2-acetolactate (S2AL) to yield (R)-2,3-dihydroxy-isovalerate. In the isomerase reaction, S2AL is rearranged via a Mg-dependent methyl migration to produce 3-hydroxy-3-methyl-2-ketobutyrate (HMKB). In the reductase reaction, this 2-ketoacid undergoes a metal-dependent reduction by NADPH to yield (R)-2,3-dihydroxy-isovalerate. The polypeptide is Ketol-acid reductoisomerase (NADP(+)) (Aliivibrio fischeri (strain ATCC 700601 / ES114) (Vibrio fischeri)).